Reading from the N-terminus, the 379-residue chain is tRNA (guanine(26)-N(2))-dimethyltransferase (379 aa).

The 372-residue stretch at 4–375 (VEVLEGKAKI…APYEVFVNVL (372 aa)) folds into the Trm1 methyltransferase domain. Positions 36, 61, 78, 120, and 121 each coordinate S-adenosyl-L-methionine.

It belongs to the class I-like SAM-binding methyltransferase superfamily. Trm1 family.

It carries out the reaction guanosine(26) in tRNA + 2 S-adenosyl-L-methionine = N(2)-dimethylguanosine(26) in tRNA + 2 S-adenosyl-L-homocysteine + 2 H(+). Functionally, dimethylates a single guanine residue at position 26 of a number of tRNAs using S-adenosyl-L-methionine as donor of the methyl groups. This is tRNA (guanine(26)-N(2))-dimethyltransferase from Pyrococcus abyssi (strain GE5 / Orsay).